The following is a 61-amino-acid chain: Small ribosomal subunit protein uS14 (61 aa).

C24, C27, C40, and C43 together coordinate Zn(2+).

This sequence belongs to the universal ribosomal protein uS14 family. Zinc-binding uS14 subfamily. As to quaternary structure, part of the 30S ribosomal subunit. Contacts proteins S3 and S10. Requires Zn(2+) as cofactor.

Functionally, binds 16S rRNA, required for the assembly of 30S particles and may also be responsible for determining the conformation of the 16S rRNA at the A site. The polypeptide is Small ribosomal subunit protein uS14 (Deinococcus geothermalis (strain DSM 11300 / CIP 105573 / AG-3a)).